Consider the following 376-residue polypeptide: PqqA peptide cyclase (376 aa).

Residues Val-7–Ala-222 enclose the Radical SAM core domain. Cys-21, Cys-25, and Cys-28 together coordinate [4Fe-4S] cluster.

This sequence belongs to the radical SAM superfamily. PqqE family. In terms of assembly, interacts with PqqD. The interaction is necessary for activity of PqqE. The cofactor is [4Fe-4S] cluster.

It carries out the reaction [PQQ precursor protein] + S-adenosyl-L-methionine = E-Y cross-linked-[PQQ precursor protein] + 5'-deoxyadenosine + L-methionine + H(+). Its pathway is cofactor biosynthesis; pyrroloquinoline quinone biosynthesis. In terms of biological role, catalyzes the cross-linking of a glutamate residue and a tyrosine residue in the PqqA protein as part of the biosynthesis of pyrroloquinoline quinone (PQQ). The polypeptide is PqqA peptide cyclase (Pseudomonas putida (strain ATCC 47054 / DSM 6125 / CFBP 8728 / NCIMB 11950 / KT2440)).